Consider the following 53-residue polypeptide: Rubredoxin (53 aa).

In terms of domain architecture, Rubredoxin-like spans 1 to 53; that stretch reads MQKFECTLCGYIYDPALVGPDTPDQDGAFEDVSENWVCPLCGAGKEDFEVYED. Cys6, Cys9, Cys38, and Cys41 together coordinate Fe cation.

It belongs to the rubredoxin family. Fe(3+) serves as cofactor.

Rubredoxin is a small nonheme, iron protein lacking acid-labile sulfide. Its single Fe, chelated to 4 Cys, functions as an electron acceptor and may also stabilize the conformation of the molecule. In Peptoniphilus asaccharolyticus (Peptostreptococcus asaccharolyticus), this protein is Rubredoxin.